The sequence spans 443 residues: 5-methylthioadenosine/S-adenosylhomocysteine deaminase (443 aa).

2 residues coordinate Zn(2+): His74 and His76. Residues Glu103 and His196 each coordinate substrate. A Zn(2+)-binding site is contributed by His223. Substrate-binding residues include Glu226 and Asp311. Residue Asp311 participates in Zn(2+) binding.

It belongs to the metallo-dependent hydrolases superfamily. MTA/SAH deaminase family. Zn(2+) is required as a cofactor.

It carries out the reaction S-adenosyl-L-homocysteine + H2O + H(+) = S-inosyl-L-homocysteine + NH4(+). It catalyses the reaction S-methyl-5'-thioadenosine + H2O + H(+) = S-methyl-5'-thioinosine + NH4(+). Its function is as follows. Catalyzes the deamination of 5-methylthioadenosine and S-adenosyl-L-homocysteine into 5-methylthioinosine and S-inosyl-L-homocysteine, respectively. Is also able to deaminate adenosine. The chain is 5-methylthioadenosine/S-adenosylhomocysteine deaminase from Haloquadratum walsbyi (strain DSM 16790 / HBSQ001).